We begin with the raw amino-acid sequence, 323 residues long: Cyclin-H (323 aa).

Ser5 bears the Phosphoserine; by CDK8 mark. At Ser132 the chain carries Phosphoserine. The tract at residues 295-323 (KGYEDDDYVSKKPKQEEEEWTDDDLVDSL) is disordered. At Ser304 the chain carries Phosphoserine; by CDK8. The span at 310-323 (EEEEWTDDDLVDSL) shows a compositional bias: acidic residues. Phosphothreonine is present on Thr315. Ser322 carries the post-translational modification Phosphoserine.

This sequence belongs to the cyclin family. Cyclin C subfamily. In terms of assembly, associates primarily with CDK7 and MAT1 to form the CAK complex. CAK can further associate with the core-TFIIH to form the TFIIH basal transcription factor. Expressed in both the germinal and somatic cells of the testis.

Its subcellular location is the nucleus. Its function is as follows. Regulates CDK7, the catalytic subunit of the CDK-activating kinase (CAK) enzymatic complex. CAK activates the cyclin-associated kinases CDK1, CDK2, CDK4 and CDK6 by threonine phosphorylation. CAK complexed to the core-TFIIH basal transcription factor activates RNA polymerase II by serine phosphorylation of the repetitive C-terminal domain (CTD) of its large subunit (POLR2A), allowing its escape from the promoter and elongation of the transcripts. Involved in cell cycle control and in RNA transcription by RNA polymerase II. Its expression and activity are constant throughout the cell cycle. The chain is Cyclin-H (Ccnh) from Mus musculus (Mouse).